The following is a 126-amino-acid chain: Fluoride-specific ion channel FluC (126 aa).

The next 2 membrane-spanning stretches (helical) occupy residues 2 to 22 (IKSL…RWLL) and 36 to 56 (GTLV…AYFL). Residues glycine 75 and serine 78 each coordinate Na(+). 2 consecutive transmembrane segments (helical) span residues 80 to 100 (FSTF…IWAL) and 105 to 125 (VHVI…TILF).

This sequence belongs to the fluoride channel Fluc/FEX (TC 1.A.43) family. In terms of assembly, homodimer.

The protein resides in the cell inner membrane. It carries out the reaction fluoride(in) = fluoride(out). Its activity is regulated as follows. Na(+) is not transported, but it plays an essential structural role and its presence is essential for fluoride channel function. Fluoride-specific ion channel. Important for reducing fluoride concentration in the cell, thus reducing its toxicity. Is highly specific for fluoride ions and cannot transport chloride ions. This chain is Fluoride-specific ion channel FluC, found in Escherichia coli O1:K1 / APEC.